Consider the following 349-residue polypeptide: Glycerol-3-phosphate dehydrogenase [NAD(P)+] (349 aa).

Residues serine 31, phenylalanine 32, arginine 52, lysine 53, and lysine 126 each contribute to the NADPH site. Residues lysine 126, glycine 154, and serine 156 each coordinate sn-glycerol 3-phosphate. Position 158 (alanine 158) interacts with NADPH. Sn-glycerol 3-phosphate-binding residues include lysine 209, aspartate 262, serine 272, arginine 273, and asparagine 274. Catalysis depends on lysine 209, which acts as the Proton acceptor. Residue arginine 273 participates in NADPH binding. Positions 297 and 299 each coordinate NADPH.

Belongs to the NAD-dependent glycerol-3-phosphate dehydrogenase family.

The protein localises to the cytoplasm. The enzyme catalyses sn-glycerol 3-phosphate + NAD(+) = dihydroxyacetone phosphate + NADH + H(+). It carries out the reaction sn-glycerol 3-phosphate + NADP(+) = dihydroxyacetone phosphate + NADPH + H(+). The protein operates within membrane lipid metabolism; glycerophospholipid metabolism. Catalyzes the reduction of the glycolytic intermediate dihydroxyacetone phosphate (DHAP) to sn-glycerol 3-phosphate (G3P), the key precursor for phospholipid synthesis. The protein is Glycerol-3-phosphate dehydrogenase [NAD(P)+] of Clostridium tetani (strain Massachusetts / E88).